The sequence spans 212 residues: Response regulator SsrB (212 aa).

Residues 1–138 (MKEYKILLVD…PTLNREAILA (138 aa)) are required for prevention of DNA binding in absence of phosphorylation and for full stimulation of activity by acidic pH. The 117-residue stretch at 5–121 (KILLVDDHEI…VLLAALQTVA (117 aa)) folds into the Response regulatory domain. Residue Asp56 is modified to 4-aspartylphosphate. The HTH luxR-type domain occupies 143–208 (DTTNHQLLTL…ELLNCARRMR (66 aa)). A DNA-binding region (H-T-H motif) is located at residues 167–186 (NHGISEKLHISIKTVETHRM). An S-nitrosocysteine modification is found at Cys203.

Homodimer; disulfide-linked; dimerizes upon DNA-binding. In terms of processing, ssrB phosphorylated on Asp-56 activates the expression of virulence genes whereas the unphosphorylated form controls biofilm formation. Independently of SsrA, can be phosphorylated by small inorganic phosphate donors (such as acetyl phosphate or phosphoramidate). Disulfide bond formation at Cys-203 is not required for dimerization. Post-translationally, cys-203 may serve as a redox sensor that is nitrosylated in presence of reactive nitrogen species (RNS) generated by the host, the modification modulates its DNA-binding activity. Cys-203 is relatively resistant to oxidation by hydrogen peroxide.

The protein resides in the cytoplasm. In terms of biological role, member of the two-component regulatory system SsrA/SsrB (SpiR/SsrB) that is required for intracellular proliferation and systemic dissemination within the host. When inside acidic Salmonella-containing vesicles (SCV) within host cells the SsrA sensor kinase autophosphorylates and the phosphoryl group is transferred to the response regulator SsrB; phosphorylated SsrB activates the expression of genes encoding virulence proteins, including pathogenicity island 2 (SPI2) and other horizontally acquired genes, but also ancestral genes; it can stimulate gene expression both by recruiting RNA polymerase and by antagonizing the action of the transcriptional repressor hns (H-NS). Can also act independently of sensor kinase ssrA to support the dormant carrier state by directing the transcription of factors required for biofilm formation. DNA-binding is stimulated by acidic pH conditions, and binding promotes bending of DNA both upstream and downstream of binding sites. Binds a degenerate 18-basepair palindromic sequence with a 7-4-7 internal organization, and regulates gene expression from 86 operons. When phosphorylated, activates the transcription of the ABC transporter complex dalSTUV, which helps protect the organism from oxidative killing by host neutrophils. Binds the phoP promoter to stimulate expression in acidic pH conditions. Antagonizes hns to activate the transcription of ugtL. Following invasion of host cells, binds the hilD and hilA regulatory regions to repress their transcription and consequently to repress transcription of pathogenicity island 1 (SPI1) encoding genes involved in host cell invasion. Binds the promoters of the flagellar master regulators flhD and flhC to repress their expression and consequently to suppress flagellar motility and promote evasion of the host inflammasome during infection of host cells. Activates expression of sseI/srfH, sifA, sifB, sseJ and regulates its own expression. When unphosphorylated, relieves the hns-mediated repression of master biofilm regulator csgD by binding and bending the csgD regulatory region. May act as early as in the lumen of the host small intestine, to activate the expression of virulence proteins prior to invasion of host cells. The protein is Response regulator SsrB of Salmonella typhimurium (strain LT2 / SGSC1412 / ATCC 700720).